A 763-amino-acid polypeptide reads, in one-letter code: MKRLQLFGRSKYFSLVSSAAKEEEEEEEGCADAKSLLHSTSHDIKSRSLRFNDKSSLMCLPTKVLLLILRTLDFNTLVTLCQVNSRFYNLITNEFLFQNVILDSKLSLLKFNALIHSEFHTSNIVTHSGDCSTQSRSQNARFLVRSIEFKNPQSQDSLLKYSKFYNKSGQDSIIAGSYKLDSYDKDVKKLNNIRLNDETPIITSERIKLLDKLESNYFHYTYIELMLDIIDYLPNLTRVILSDVEPNFKIPLWYSVFNDGSRDFFKKIIKGQQSITNEDLRTFQLSKKFVKEYESKYYSLPRLKILEIKANNKRQRTFNRQRHHQKLVLRPSLFCCFGIINELKLENVTIDTESLDTPMEFLPLFLKNEDNELYSLQSPITALTLDSCDVVPGNGILRLFHSYFKMVKHLSLLKINSKFDLLLCSCFPSLSNLTIDCNSKCFTNEQVVGESYYFQQRSLDTEDDFDDCNSMTETLFEAPSDSKIITPPPTSSVVLSLNLNYISRTTGNDVSNNPSPDNNKKPAMLTAAQLQNFQRQRIPEFHSFYHYYRLLWERLPSKNISINVINIPFTNVYPLSPLSFWEHLARTITSVDETDEDVGDENDQETLIGYENNSIRDNIPNANAVPNLSTVMSPESDIHHTYYWNNSVRRCLRDSLIKLKNRTIEYRDLDVEEFLQNVTLENFFNDFQDPENFKDIPNINLWCFLRNLSKFKAVKIRMLRHFSLCTPRTRYDWELLLKPVLRVNVPIEVRDKDGFVLYSYGQK.

The region spanning 54-100 (KSSLMCLPTKVLLLILRTLDFNTLVTLCQVNSRFYNLITNEFLFQNV) is the F-box domain. The residue at position 594 (threonine 594) is a Phosphothreonine.

In terms of assembly, interacts with SKP1. Component of the probable SCF(SKP2) complex containing CDC53, SKP1, RBX1 and SKP2. May interact with ribosomes.

The protein localises to the cytoplasm. It functions in the pathway protein modification; protein ubiquitination. In terms of biological role, substrate recognition component of a SCF (SKP1-CUL1-F-box protein) E3 ubiquitin-protein ligase complex which mediates the ubiquitination and subsequent proteasomal degradation of target proteins. Probably recognizes and binds to phosphorylated target proteins. Regulates protein levels of sulfur metabolism enzymes. The SCF(SKP2) complex may regulate some transcription factors or regulators of cysteine and methionine biosynthesis. In Saccharomyces cerevisiae (strain ATCC 204508 / S288c) (Baker's yeast), this protein is F-box protein SKP2 (SKP2).